Reading from the N-terminus, the 442-residue chain is 3-isopropylmalate dehydratase large subunit (442 aa).

[4Fe-4S] cluster-binding residues include Xaa347, Cys407, and Cys410.

This sequence belongs to the aconitase/IPM isomerase family. LeuC type 1 subfamily. Heterodimer of LeuC and LeuD. [4Fe-4S] cluster is required as a cofactor.

The enzyme catalyses (2R,3S)-3-isopropylmalate = (2S)-2-isopropylmalate. It functions in the pathway amino-acid biosynthesis; L-leucine biosynthesis; L-leucine from 3-methyl-2-oxobutanoate: step 2/4. In terms of biological role, catalyzes the isomerization between 2-isopropylmalate and 3-isopropylmalate, via the formation of 2-isopropylmaleate. The polypeptide is 3-isopropylmalate dehydratase large subunit (Buchnera aphidicola subsp. Macrosiphoniella ludovicianae).